Reading from the N-terminus, the 227-residue chain is Adapter protein MecA 1 (227 aa).

The protein belongs to the MecA family. Homodimer.

Functionally, enables the recognition and targeting of unfolded and aggregated proteins to the ClpC protease or to other proteins involved in proteolysis. Acts negatively in the development of competence by binding ComK and recruiting it to the ClpCP protease. When overexpressed, inhibits sporulation. Also involved in Spx degradation by ClpC. This Bacillus cereus (strain ATCC 14579 / DSM 31 / CCUG 7414 / JCM 2152 / NBRC 15305 / NCIMB 9373 / NCTC 2599 / NRRL B-3711) protein is Adapter protein MecA 1 (mecA1).